A 107-amino-acid chain; its full sequence is Large ribosomal subunit protein uL24 (107 aa).

Belongs to the universal ribosomal protein uL24 family. As to quaternary structure, part of the 50S ribosomal subunit.

Its function is as follows. One of two assembly initiator proteins, it binds directly to the 5'-end of the 23S rRNA, where it nucleates assembly of the 50S subunit. Functionally, one of the proteins that surrounds the polypeptide exit tunnel on the outside of the subunit. The polypeptide is Large ribosomal subunit protein uL24 (Thiobacillus denitrificans (strain ATCC 25259 / T1)).